The primary structure comprises 529 residues: G-protein coupled receptor 161 (529 aa).

Residues M1–Q30 lie on the Extracellular side of the membrane. N-linked (GlcNAc...) asparagine glycans are attached at residues N4 and N15. The chain crosses the membrane as a helical span at residues F31–T51. Residues L52–K64 lie on the Cytoplasmic side of the membrane. The helical transmembrane segment at F65–V85 threads the bilayer. Topologically, residues T86–N101 are extracellular. The cysteines at positions 100 and 178 are disulfide-linked. The chain crosses the membrane as a helical span at residues F102–I123. The Cytoplasmic portion of the chain corresponds to D124–R143. Residues A144–F164 form a helical membrane-spanning segment. Topologically, residues G165–A190 are extracellular. Residues F191 to I211 traverse the membrane as a helical segment. Residues F212–L269 lie on the Cytoplasmic side of the membrane. Residues I270–I290 traverse the membrane as a helical segment. The Extracellular segment spans residues A291–E306. A helical transmembrane segment spans residues T307–W327. The Cytoplasmic portion of the chain corresponds to N328 to R529.

The protein belongs to the G-protein coupled receptor 1 family.

It is found in the cell projection. The protein localises to the cilium membrane. The protein resides in the cell membrane. In terms of biological role, key negative regulator of Shh signaling, which promotes the processing of GLI3 into GLI3R during neural tube development. Recruited by TULP3 and the IFT-A complex to primary cilia and acts as a regulator of the PKA-dependent basal repression machinery in Shh signaling by increasing cAMP levels, leading to promote the PKA-dependent processing of GLI3 into GLI3R and repress the Shh signaling. In presence of SHH, it is removed from primary cilia and is internalized into recycling endosomes, preventing its activity and allowing activation of the Shh signaling. Its ligand is unknown. The chain is G-protein coupled receptor 161 (GPR161) from Homo sapiens (Human).